Here is a 141-residue protein sequence, read N- to C-terminus: Protein NrdI (141 aa).

This sequence belongs to the NrdI family.

Its function is as follows. Probably involved in ribonucleotide reductase function. The polypeptide is Protein NrdI (Wigglesworthia glossinidia brevipalpis).